The following is a 42-amino-acid chain: Photosystem I reaction center subunit IX (42 aa).

A helical membrane pass occupies residues 7-27 (YLSVAPVLSTLWFGSLAGLLI).

This sequence belongs to the PsaJ family.

It is found in the plastid. Its subcellular location is the chloroplast thylakoid membrane. Functionally, may help in the organization of the PsaE and PsaF subunits. The chain is Photosystem I reaction center subunit IX from Daucus carota (Wild carrot).